The primary structure comprises 1943 residues: Sickle tail protein homolog (1943 aa).

Disordered stretches follow at residues 1 to 79 (MEEN…KEIL) and 112 to 177 (QERL…RSTN). Over residues 38 to 47 (AECRRTKERL) the composition is skewed to basic and acidic residues. Polar residues predominate over residues 48–62 (SNGNSRGSVSKSSRN). Serine 169 is modified (phosphoserine). Position 244 is a phosphotyrosine (tyrosine 244). A disordered region spans residues 290-331 (ARGDGPGAPRPGSTAHPPHAIPNSPPSTPVPHSMPPSPSRIP). The segment covering 308–328 (HAIPNSPPSTPVPHSMPPSPS) has biased composition (pro residues). An O-linked (GlcNAc) serine glycan is attached at serine 357. Phosphoserine is present on residues serine 361 and serine 365. A Phosphotyrosine modification is found at tyrosine 393. Residues 456–476 (RKYPDSHLPTLGSKTPPASPH) form a disordered region. Residue threonine 470 is modified to Phosphothreonine. 2 positions are modified to phosphoserine: serine 474 and serine 526. Coiled-coil stretches lie at residues 557 to 581 (RETR…QSAL) and 644 to 685 (MSLL…ELEI). The residue at position 809 (serine 809) is a Phosphoserine. The segment at 848-874 (VLKSQEEAAHTSGQPFHSTGAPGDAKS) is disordered. Positions 957–985 (SAKNRAVSIEKAEKKWEEKRQNLDHYNGK) form a coiled coil. 3 disordered regions span residues 1003–1230 (PNLE…SDAS), 1305–1329 (KTKE…TESS), and 1352–1377 (PKEA…TEEN). Serine 1027, serine 1030, serine 1033, and serine 1044 each carry phosphoserine. Pro residues predominate over residues 1044 to 1053 (SPPPPPPPPR). Basic and acidic residues-rich tracts occupy residues 1155–1167 (EPSR…KDTR), 1174–1192 (PKEK…KSDV), and 1305–1318 (KTKE…DKCH). Over residues 1368–1377 (SSSSSPTEEN) the composition is skewed to polar residues. Serine 1461 is modified (phosphoserine). Positions 1464–1490 (FEECDEELERMMMEEKIEEEEEEENGD) form a coiled coil. Disordered regions lie at residues 1481 to 1572 (EEEE…PKKK), 1606 to 1660 (EEEE…EIRK), and 1677 to 1943 (ENTI…KETS). Composition is skewed to polar residues over residues 1491 to 1501 (SVVQNNNTSQM) and 1512 to 1533 (RTGQ…TRNP). Composition is skewed to basic and acidic residues over residues 1539–1548 (NRTELNKFSH) and 1612–1625 (GTLK…RFEI). Polar residues predominate over residues 1643-1653 (QPSIESTSPIS). A coiled-coil region spans residues 1656–1686 (DEIRKNTYRTLDSLEQTIKQLENTISEMSPK). Composition is skewed to polar residues over residues 1691–1706 (TSCS…SSHI) and 1731–1747 (IPSA…QTSR). Serine 1739 carries the phosphoserine modification. A compositionally biased stretch (basic and acidic residues) spans 1763–1775 (KPGKQSKLQDPRQ). Low complexity predominate over residues 1806-1825 (SPSSGKSSSLPSSSGDSSNL). Polar residues-rich tracts occupy residues 1834 to 1843 (SIASNPLSPQ) and 1853 to 1869 (LIPS…SLTH). Serine 1841 is modified (phosphoserine). Over residues 1892-1905 (SFSSSPPSPASSVS) the composition is skewed to low complexity. Residues serine 1896, serine 1899, and serine 1902 each carry the phosphoserine modification. Residues 1906 to 1943 (LNQGAKGTRTIHTPSLTSYKAQNGSSSKATPSTAKETS) are compositionally biased toward polar residues.

In terms of assembly, interacts with CPNE4 (via VWFA domain).

It is found in the cytoplasm. Its subcellular location is the cytoskeleton. The protein localises to the microtubule organizing center. It localises to the centrosome. Required for normal development of intervertebral disks. The polypeptide is Sickle tail protein homolog (KIAA1217) (Homo sapiens (Human)).